The following is a 142-amino-acid chain: Transcription antitermination protein NusB (142 aa).

This sequence belongs to the NusB family.

Its function is as follows. Involved in transcription antitermination. Required for transcription of ribosomal RNA (rRNA) genes. Binds specifically to the boxA antiterminator sequence of the ribosomal RNA (rrn) operons. This Borreliella burgdorferi (strain ATCC 35210 / DSM 4680 / CIP 102532 / B31) (Borrelia burgdorferi) protein is Transcription antitermination protein NusB.